A 238-amino-acid chain; its full sequence is Large ribosomal subunit protein uL1 (238 aa).

It belongs to the universal ribosomal protein uL1 family. Part of the 50S ribosomal subunit.

Functionally, binds directly to 23S rRNA. The L1 stalk is quite mobile in the ribosome, and is involved in E site tRNA release. Its function is as follows. Protein L1 is also a translational repressor protein, it controls the translation of the L11 operon by binding to its mRNA. In Frankia casuarinae (strain DSM 45818 / CECT 9043 / HFP020203 / CcI3), this protein is Large ribosomal subunit protein uL1.